A 648-amino-acid chain; its full sequence is Wilms tumor protein 1-interacting protein homolog (648 aa).

3 disordered regions span residues 27-56 (DGMY…KVYS), 142-291 (SNSL…SPRS), and 306-327 (SPRS…GSMS). 2 stretches are compositionally biased toward low complexity: residues 158 to 171 (SPRS…SSQD) and 178 to 192 (PRSS…LVSP). Polar residues-rich tracts occupy residues 197 to 213 (GTSV…TASD) and 220 to 241 (PRTS…TSGI). Positions 252 to 267 (PRSSTTSPRSSYSDSR) are enriched in low complexity. LIM zinc-binding domains are found at residues 437 to 498 (GICV…SGFQ), 502 to 561 (EKCF…TVFA), and 562 to 631 (PKCA…RLKT).

It belongs to the zyxin/ajuba family.

It is found in the cell junction. Its subcellular location is the adherens junction. The protein localises to the nucleus. Its function is as follows. May monitor slit diaphragm protein assembly, a specialized adherens junction characteristic of podocytes. In case of podocyte injury, it shuttles into the nucleus and acts as a transcription regulator. Plays a role in the regulation of cell morphology and cytoskeletal organization. Acts as a transcriptional corepressor for snai1 and snai2/slug and plays a role in regulating neural crest development. The polypeptide is Wilms tumor protein 1-interacting protein homolog (wtip) (Danio rerio (Zebrafish)).